Consider the following 383-residue polypeptide: 8-amino-7-oxononanoate synthase (383 aa).

Arginine 21 contacts substrate. 108 to 109 (GY) lines the pyridoxal 5'-phosphate pocket. Histidine 133 is a binding site for substrate. Pyridoxal 5'-phosphate-binding residues include serine 179, histidine 207, and threonine 233. Lysine 236 carries the N6-(pyridoxal phosphate)lysine modification. Threonine 350 lines the substrate pocket.

The protein belongs to the class-II pyridoxal-phosphate-dependent aminotransferase family. BioF subfamily. Homodimer. The cofactor is pyridoxal 5'-phosphate.

It catalyses the reaction 6-carboxyhexanoyl-[ACP] + L-alanine + H(+) = (8S)-8-amino-7-oxononanoate + holo-[ACP] + CO2. The protein operates within cofactor biosynthesis; biotin biosynthesis. In terms of biological role, catalyzes the decarboxylative condensation of pimeloyl-[acyl-carrier protein] and L-alanine to produce 8-amino-7-oxononanoate (AON), [acyl-carrier protein], and carbon dioxide. The sequence is that of 8-amino-7-oxononanoate synthase from Yersinia pestis bv. Antiqua (strain Angola).